The chain runs to 791 residues: Nuclear cap-binding protein subunit 1-A (791 aa).

Positions 1 to 24 (MSRRRHSDENDGGQAHKRRKTSEP) are disordered. The MIF4G domain maps to 28–240 (EDRLESLICR…CLWAQIQKLK (213 aa)). The stretch at 641 to 714 (LHSTIRKMNK…SEQKNLFLVI (74 aa)) forms a coiled coil. A disordered region spans residues 664-687 (QRLAKQHKHRDSDDNDEDSGRKDG).

Belongs to the NCBP1 family. As to quaternary structure, component of the nuclear cap-binding complex (CBC), a heterodimer composed of ncbp1/cbp80 and ncbp2/cbp20 that interacts with m7GpppG-capped RNA. Component of an alternative nuclear cap-binding complex (CBC) composed of ncbp1/cbp80 and ncbp3.

The protein resides in the nucleus. It localises to the cytoplasm. Component of the cap-binding complex (CBC), which binds cotranscriptionally to the 5'-cap of pre-mRNAs and is involved in various processes such as pre-mRNA splicing, translation regulation, nonsense-mediated mRNA decay, RNA-mediated gene silencing (RNAi) by microRNAs (miRNAs) and mRNA export. The CBC complex is involved in mRNA export from the nucleus, leading to the recruitment of the mRNA export machinery to the 5'-end of mRNA and to mRNA export in a 5' to 3' direction through the nuclear pore. The CBC complex is also involved in mediating U snRNA and intronless mRNAs export from the nucleus. The CBC complex is essential for a pioneer round of mRNA translation, before steady state translation when the CBC complex is replaced by cytoplasmic cap-binding protein eIF4E. The pioneer round of mRNA translation mediated by the CBC complex plays a central role in nonsense-mediated mRNA decay (NMD), NMD only taking place in mRNAs bound to the CBC complex, but not on eIF4E-bound mRNAs. The CBC complex enhances NMD in mRNAs containing at least one exon-junction complex (EJC), promoting the interaction between UPF1 and UPF2. The CBC complex is also involved in 'failsafe' NMD, which is independent of the EJC complex, while it does not participate in Staufen-mediated mRNA decay (SMD). During cell proliferation, the CBC complex is also involved in microRNAs (miRNAs) biogenesis via its interaction with SRRT/ARS2 and is required for miRNA-mediated RNA interference. The CBC complex also acts as a negative regulator of parn, thereby acting as an inhibitor of mRNA deadenylation. In the CBC complex, NCBP1/CBP80 does not bind directly capped RNAs (m7GpppG-capped RNA) but is required to stabilize the movement of the N-terminal loop of NCBP2/CBP20 and lock the CBC into a high affinity cap-binding state with the cap structure. Associates with NCBP3 to form an alternative cap-binding complex (CBC) which plays a key role in mRNA export. The conventional CBC with NCBP2 binds both small nuclear RNA (snRNA) and messenger (mRNA) and is involved in their export from the nucleus whereas the alternative CBC with NCBP3 does not bind snRNA and associates only with mRNA thereby playing a role only in mRNA export. This is Nuclear cap-binding protein subunit 1-A (ncbp1-a) from Xenopus laevis (African clawed frog).